The following is a 129-amino-acid chain: Regulator of ribonuclease activity B (129 aa).

It belongs to the RraB family. In terms of assembly, interacts with the C-terminal region of Rne.

Its subcellular location is the cytoplasm. Its function is as follows. Globally modulates RNA abundance by binding to RNase E (Rne) and regulating its endonucleolytic activity. Can modulate Rne action in a substrate-dependent manner by altering the composition of the degradosome. This Shewanella denitrificans (strain OS217 / ATCC BAA-1090 / DSM 15013) protein is Regulator of ribonuclease activity B.